We begin with the raw amino-acid sequence, 397 residues long: MALLRRPTVSSDLKNIDTGVNPKAKSHVTIRRAVLEEIGNKVRSRAAPVAKKPQNTKIPVQPTKVTHVNKQPKPTASVKPVQMETLAPKDPPAPEDVSMKEENLCQAFSDALLCKIEDIDNEDWENPQLCSDYVKDIYQYLRQLEVLQSINPHFLDGRDINGRMRAILVDWLVQVHSKFRLLQETLYMCIAIMDRFLQAQPVCRKKLQLVGITALLLASKYEEMFSPNIEDFVYITDNAYTSSQIREMETLILKELKFELGRPLPLHFLRRASKAGEVDVEQHTLAKYLMELTLIDYDMVHYHPSQVAAAASCLSQKVLGQGKWNLKQQYYTGYMETEVLEVMQHMAKNVVKVNENLTKFIAVKNKYASSRLLKISTIPQLNSKTIKDLASPLMGRL.

Disordered regions lie at residues 1 to 20 (MALL…DTGV) and 64 to 97 (KVTH…PEDV). Residue T8 is modified to Phosphothreonine. S11 is modified (phosphoserine). A compositionally biased stretch (polar residues) spans 64–74 (KVTHVNKQPKP). 3 positions are modified to phosphoserine: S77, S98, and S391.

The protein belongs to the cyclin family. Cyclin AB subfamily. As to quaternary structure, interacts with the CDK1 protein kinase to form a serine/threonine kinase holoenzyme complex also known as maturation promoting factor (MPF). The cyclin subunit imparts substrate specificity to the complex.

Its function is as follows. Essential for the control of the cell cycle at the G2/M (mitosis) transition. The sequence is that of G2/mitotic-specific cyclin-B2 (CCNB2) from Mesocricetus auratus (Golden hamster).